A 236-amino-acid polypeptide reads, in one-letter code: Lipoarabinomannan carrier protein LprG (236 aa).

The first 25 residues, 1-25 (MQTRPRFAVQSLFAILATAAALVAG), serve as a signal peptide directing secretion. C26 is lipidated: N-palmitoyl cysteine. C26 carries the S-diacylglycerol cysteine lipid modification.

It belongs to the LppX/LprAFG lipoprotein family. As to quaternary structure, interacts with itself, Ag85A (MSMEG_6398), LppI (MSMEG_3851) and LppK (MSMEG_3904) in vivo.

The protein resides in the cell inner membrane. The protein localises to the secreted. It localises to the cell wall. In terms of biological role, helps membrane protein MSMEG_3069/MSMEI_2992 (P55) transport triacylglycerides (TAG) across the inner cell membrane into the periplasm and probably ultimately to the outer membrane. Binds TAG in its hydrophobic cavity and transfers it between lipid bilayers. TAG probably regulates lipid metabolism and growth regulation and plays a structural role in the outer membrane. Also binds mannosides, lipoarabinomannan and lipomannan and various glycolipids in the same cavity. Required for MSMEG_3069/MSMEI_2992 export activity. Export of ethidium bromide by MSMEG_3069/MSMEI_2992 can be complemented by the equivalent operon from M.tuberculosis (lprG-Rv1410c). Involved in mycolylation. This is Lipoarabinomannan carrier protein LprG from Mycolicibacterium smegmatis (strain ATCC 700084 / mc(2)155) (Mycobacterium smegmatis).